Here is a 613-residue protein sequence, read N- to C-terminus: 4-hydroxy-3-methylbut-2-en-1-yl diphosphate synthase (flavodoxin) (613 aa).

The [4Fe-4S] cluster site is built by Cys514, Cys517, Cys548, and Glu555.

It belongs to the IspG family. Requires [4Fe-4S] cluster as cofactor.

The catalysed reaction is (2E)-4-hydroxy-3-methylbut-2-enyl diphosphate + oxidized [flavodoxin] + H2O + 2 H(+) = 2-C-methyl-D-erythritol 2,4-cyclic diphosphate + reduced [flavodoxin]. It functions in the pathway isoprenoid biosynthesis; isopentenyl diphosphate biosynthesis via DXP pathway; isopentenyl diphosphate from 1-deoxy-D-xylulose 5-phosphate: step 5/6. Converts 2C-methyl-D-erythritol 2,4-cyclodiphosphate (ME-2,4cPP) into 1-hydroxy-2-methyl-2-(E)-butenyl 4-diphosphate. The polypeptide is 4-hydroxy-3-methylbut-2-en-1-yl diphosphate synthase (flavodoxin) (Chlamydia pneumoniae (Chlamydophila pneumoniae)).